A 226-amino-acid chain; its full sequence is Holliday junction branch migration complex subunit RuvA (226 aa).

A domain I region spans residues 1 to 67; that stretch reads MITSVYAKIE…AINKELYAFK (67 aa). Residues 68-145 form a domain II region; it reads SLKEKEWFKA…YLKNQIVVSD (78 aa). Residues 146–167 form a flexible linker region; the sequence is KVEPQIDDDEKIDDSKDLNDDE. The domain III stretch occupies residues 168–226; it reads LLSEIVIEAIDCLISLGYKQEQIKTALAEIDLKNESINDSADLVAVIIKQIGLRTSEVS.

Belongs to the RuvA family. In terms of assembly, homotetramer. Forms an RuvA(8)-RuvB(12)-Holliday junction (HJ) complex. HJ DNA is sandwiched between 2 RuvA tetramers; dsDNA enters through RuvA and exits via RuvB. An RuvB hexamer assembles on each DNA strand where it exits the tetramer. Each RuvB hexamer is contacted by two RuvA subunits (via domain III) on 2 adjacent RuvB subunits; this complex drives branch migration. In the full resolvosome a probable DNA-RuvA(4)-RuvB(12)-RuvC(2) complex forms which resolves the HJ.

The protein resides in the cytoplasm. Its function is as follows. The RuvA-RuvB-RuvC complex processes Holliday junction (HJ) DNA during genetic recombination and DNA repair, while the RuvA-RuvB complex plays an important role in the rescue of blocked DNA replication forks via replication fork reversal (RFR). RuvA specifically binds to HJ cruciform DNA, conferring on it an open structure. The RuvB hexamer acts as an ATP-dependent pump, pulling dsDNA into and through the RuvAB complex. HJ branch migration allows RuvC to scan DNA until it finds its consensus sequence, where it cleaves and resolves the cruciform DNA. In Mycoplasmoides gallisepticum (strain R(low / passage 15 / clone 2)) (Mycoplasma gallisepticum), this protein is Holliday junction branch migration complex subunit RuvA.